We begin with the raw amino-acid sequence, 366 residues long: Glutamate 5-kinase (366 aa).

Lys-17 is a binding site for ATP. The substrate site is built by Ser-57, Asp-144, and Asn-156. Residues 176–177 and 216–222 contribute to the ATP site; these read SD and TGGMASK. Residues 278–352 enclose the PUA domain; the sequence is QGILHIDEGA…GKSTQELPAE (75 aa).

This sequence belongs to the glutamate 5-kinase family.

The protein localises to the cytoplasm. It catalyses the reaction L-glutamate + ATP = L-glutamyl 5-phosphate + ADP. The protein operates within amino-acid biosynthesis; L-proline biosynthesis; L-glutamate 5-semialdehyde from L-glutamate: step 1/2. In terms of biological role, catalyzes the transfer of a phosphate group to glutamate to form L-glutamate 5-phosphate. The sequence is that of Glutamate 5-kinase from Rhodococcus opacus (strain B4).